Here is a 286-residue protein sequence, read N- to C-terminus: Aquaporin PIP2-4 (286 aa).

2 helical membrane-spanning segments follow: residues 40 to 60 (ALIAEFVATLLFLYVTVATVI) and 77 to 97 (CGGVGVLGIAWAFGGMIFILV). The NPA 1 motif lies at 109-111 (NPA). Transmembrane regions (helical) follow at residues 128 to 148 (LLYMAAQCLGAICGVALVKGF), 170 to 190 (GTGLAAEIIGTFVLVYTVFSA), and 204 to 224 (VLAPLPIGFAVFMVHLATIPI). Positions 230–232 (NPA) match the NPA 2 motif. The helical transmembrane segment at 252-272 (IFWVGPFIGAAIAALYHQVIL) threads the bilayer.

Belongs to the MIP/aquaporin (TC 1.A.8) family. PIP (TC 1.A.8.11) subfamily. In terms of tissue distribution, expressed in roots.

It is found in the cell membrane. Water channel required to facilitate the transport of water across cell membrane. May play a role in root water uptake. The protein is Aquaporin PIP2-4 (PIP2-4) of Oryza sativa subsp. japonica (Rice).